We begin with the raw amino-acid sequence, 141 residues long: Large ribosomal subunit protein uL11 (141 aa).

This sequence belongs to the universal ribosomal protein uL11 family. Part of the ribosomal stalk of the 50S ribosomal subunit. Interacts with L10 and the large rRNA to form the base of the stalk. L10 forms an elongated spine to which L12 dimers bind in a sequential fashion forming a multimeric L10(L12)X complex. Post-translationally, one or more lysine residues are methylated.

Forms part of the ribosomal stalk which helps the ribosome interact with GTP-bound translation factors. This Chlamydia muridarum (strain MoPn / Nigg) protein is Large ribosomal subunit protein uL11.